The chain runs to 351 residues: N-terminal EF-hand calcium-binding protein 1 (351 aa).

Serine 4 carries the post-translational modification Phosphoserine. 2 EF-hand domains span residues 26–61 and 60–95; these read KGMS…GVLS and LSGE…HLGE. Ca(2+) is bound by residues aspartate 39, asparagine 41, aspartate 43, lysine 45, and glutamate 50. The stretch at 135 to 163 forms a coiled coil; that stretch reads LLKETLNQLQSLQNSLECAMETTEEQTRQ. Positions 180–203 are disordered; the sequence is GKRSSRRVQRHNSFSPNSPQFNVS. The segment covering 190 to 202 has biased composition (polar residues); the sequence is HNSFSPNSPQFNV. Serine 192 and serine 197 each carry phosphoserine. Residues 209–275 are a coiled coil; it reads EEDNQWMTQI…EEFQLALKHY (67 aa). An ABM domain is found at 252-340; the sequence is MLVQRQMSVI…LETPELTSTM (89 aa).

In terms of assembly, interacts with STX1. May interact with CPNE6. As to expression, expressed in brain (at protein level).

It localises to the cytoplasm. The chain is N-terminal EF-hand calcium-binding protein 1 (NECAB1) from Homo sapiens (Human).